Consider the following 253-residue polypeptide: MSLVRGHGDIAATTAAPLSEEGEVTSGLQALAVEDTGGPSASADQAEEEGEGGREEAEHEGSGAEEVQGEAPSPEGEERAKGESEDWCVPCSDEEVELPADGQSWMPPPSEIQRLYELLAAHGTLELQAEILPRRPPTPEAQSEEERSDEEPEAKEEEEEKPHMPTEFDFDDEPTTPKDSLIDRRRTPGSSARSQKREARLDKVLSDMKRHKKLEEQILRTGRDLFSLDSEDASPASPPLRSSGSLFPRQRKY.

Disordered stretches follow at residues 1–109 (MSLV…MPPP) and 128–253 (QAEI…QRKY). Residues 51 to 62 (EGGREEAEHEGS) show a composition bias toward basic and acidic residues. Residues 116 to 160 (YELLAAHGTLELQAEILPRRPPTPEAQSEEERSDEEPEAKEEEEE) are sufficient for interaction with NCOA1. Position 138 is a phosphothreonine (Thr-138). The segment covering 142-159 (QSEEERSDEEPEAKEEEE) has biased composition (acidic residues). Ser-143 and Ser-148 each carry phosphoserine. The tract at residues 161-253 (KPHMPTEFDF…GSLFPRQRKY (93 aa)) is sufficient for interaction with ESR1. A compositionally biased stretch (basic and acidic residues) spans 195-223 (QKREARLDKVLSDMKRHKKLEEQILRTGR). A Phosphoserine modification is found at Ser-237.

As to quaternary structure, component of the KMT2 family MLL2/MLL3 complex, at least composed of the histone methyltransferases KMT2D and/or KMT2C, the common complex subunits ASH2L, RBBP5, WDR5 and DPY30, and the complex type-specific subunits PAXIP1/PTIP, PAGR1, NCOA6 and KDM6A; PAXIP1 is required for the association with the MLL2/MLL3 complex. Forms a constitutive complex with PAXIP1/PTIP independently of the MLL2/MLL3 complex. Interacts with NCOA1, ESR1, NR3C1, AR.

Its subcellular location is the nucleus. In terms of biological role, its association with the histone methyltransferase MLL2/MLL3 complex is suggesting a role in epigenetic transcriptional activation. However, in association with PAXIP1/PTIP is proposed to function at least in part independently of the MLL2/MLL3 complex. Proposed to be recruited by PAXIP1 to sites of DNA damage where the PAGR1:PAXIP1 complex is required for cell survival in response to DNA damage independently of the MLL2/MLL3 complex. However, its function in DNA damage has been questioned. During immunoglobulin class switching in activated B-cells is involved in transcription regulation of downstream switch regions at the immunoglobulin heavy-chain (Igh) locus independently of the MLL2/MLL3 complex. Involved in both estrogen receptor-regulated gene transcription and estrogen-stimulated G1/S cell-cycle transition. Acts as a transcriptional cofactor for nuclear hormone receptors. Inhibits the induction properties of several steroid receptors such as NR3C1, AR and PPARG; the mechanism of inhibition appears to be gene-dependent. The chain is PAXIP1-associated glutamate-rich protein 1 (PAGR1) from Bos taurus (Bovine).